The primary structure comprises 92 residues: Small ribosomal subunit protein uS19 (92 aa).

Belongs to the universal ribosomal protein uS19 family.

Functionally, protein S19 forms a complex with S13 that binds strongly to the 16S ribosomal RNA. The sequence is that of Small ribosomal subunit protein uS19 from Methylocella silvestris (strain DSM 15510 / CIP 108128 / LMG 27833 / NCIMB 13906 / BL2).